Reading from the N-terminus, the 262-residue chain is MWNLAGKELSSRLLLGTACYPSLEHMQQAIHNSGTEVITISIKRQTSAGLDGESFWQAVKKLDCHLLPNTAGCRNAEAAINTAEIARELFNTHWIKLEVIGDDYNLQPEPFELIKAARILIDRGFEVFPYCTDDLVLCQKLVDAGCKILMPWGAPIGSGKGLINPYALETLRYRFPDITLIIDAGIGKPSHAVQVMELGFDGVLLNTAVALANHPALMATAFRHAVIAGHQAFIGGMMSERNVAHPSTPLIDTPFWHQVNNL.

Lys96 acts as the Schiff-base intermediate with DXP in catalysis. Residues Gly157, 184-185 (AG), and 206-207 (NT) contribute to the 1-deoxy-D-xylulose 5-phosphate site.

The protein belongs to the ThiG family. As to quaternary structure, homotetramer. Forms heterodimers with either ThiH or ThiS.

Its subcellular location is the cytoplasm. The catalysed reaction is [ThiS sulfur-carrier protein]-C-terminal-Gly-aminoethanethioate + 2-iminoacetate + 1-deoxy-D-xylulose 5-phosphate = [ThiS sulfur-carrier protein]-C-terminal Gly-Gly + 2-[(2R,5Z)-2-carboxy-4-methylthiazol-5(2H)-ylidene]ethyl phosphate + 2 H2O + H(+). Its pathway is cofactor biosynthesis; thiamine diphosphate biosynthesis. Its function is as follows. Catalyzes the rearrangement of 1-deoxy-D-xylulose 5-phosphate (DXP) to produce the thiazole phosphate moiety of thiamine. Sulfur is provided by the thiocarboxylate moiety of the carrier protein ThiS. In vitro, sulfur can be provided by H(2)S. This Legionella pneumophila (strain Corby) protein is Thiazole synthase.